The primary structure comprises 100 residues: Small ribosomal subunit protein uS14c (100 aa).

It belongs to the universal ribosomal protein uS14 family. As to quaternary structure, part of the 30S ribosomal subunit.

It is found in the plastid. The protein localises to the chloroplast. In terms of biological role, binds 16S rRNA, required for the assembly of 30S particles. The chain is Small ribosomal subunit protein uS14c from Platanus occidentalis (Sycamore).